The chain runs to 234 residues: Small ribosomal subunit protein eS1y (234 aa).

Residues 1 to 18 are compositionally biased toward basic residues; the sequence is MAVGKNKRISKGKKGGKK. Residues 1–20 are disordered; sequence MAVGKNKRISKGKKGGKKKA.

Belongs to the eukaryotic ribosomal protein eS1 family. In terms of assembly, component of the small ribosomal subunit. Mature ribosomes consist of a small (40S) and a large (60S) subunit. The 40S subunit contains about 33 different proteins and 1 molecule of RNA (18S). The 60S subunit contains about 49 different proteins and 3 molecules of RNA (25S, 5.8S and 5S).

The protein localises to the cytoplasm. The polypeptide is Small ribosomal subunit protein eS1y (Vitis vinifera (Grape)).